We begin with the raw amino-acid sequence, 446 residues long: Citrate/sodium symporter (446 aa).

At 1–27 (MTNMSQPPATEKKGVSDLLGFKIFGMP) the chain is on the cytoplasmic side. A helical transmembrane segment spans residues 28–44 (LPLYAFALITLLLSHFY). Topologically, residues 45-50 (NALPTD) are periplasmic. The chain crosses the membrane as a helical span at residues 51–71 (IVGGFAIMFIIGAIFGEIGKR). Residues 72–80 (LPIFNKYIG) lie on the Cytoplasmic side of the membrane. Residues 81–95 (GAPVMIFLVAAYFVY) form a helical membrane-spanning segment. Residues 96–115 (AGIFTQKEIDAISNVMDKSN) are Periplasmic-facing. Residues 116–130 (FLNLFIAVLITGAIL) form a helical membrane-spanning segment. Residues 131–136 (SVNRRL) lie on the Cytoplasmic side of the membrane. The helical transmembrane segment at 137-166 (LLKSLLGYIPTILMGIVGASIFGIAIGLVF) threads the bilayer. The Periplasmic portion of the chain corresponds to 167–181 (GIPVDRIMMLYVLPI). Residues isoleucine 181 and glycine 183 each coordinate Na(+). Residues 182–189 (MGGGNGAG) constitute an intramembrane region (helical). Asparagine 186 and glycine 187 together coordinate citrate. The Periplasmic portion of the chain corresponds to 190-212 (AVPLSEIYHSVTGRSREEYYSTA). The helical transmembrane segment at 213–233 (IAILTIANIFAIVFAAVLDII) threads the bilayer. Residues 234–264 (GKKHTWLSGEGELVRKASFKVEEDEKTGQIT) lie on the Cytoplasmic side of the membrane. Residues 265–287 (HRETAVGLVLSTTCFLLAYVVAK) traverse the membrane as a helical segment. The Periplasmic portion of the chain corresponds to 288 to 299 (KILPSIGGVAIH). A helical transmembrane segment spans residues 300-315 (YFAWMVLIVAALNASG). Residues 316-327 (LCSPEIKAGAKR) lie on the Cytoplasmic side of the membrane. The helical transmembrane segment at 328–351 (LSDFFSKQLLWVLMVGVGVCYTDL) threads the bilayer. Over 352-359 (QEIINAIT) the chain is Periplasmic. The helical transmembrane segment at 360–381 (FANVVIAAIIVIGAVLGAAIGG) threads the bilayer. The Cytoplasmic segment spans residues 382-398 (WLMGFFPIESAITAGLC). Residues methionine 399 and asparagine 401 each coordinate Na(+). An intramembrane region (helical) is located at residues 399–406 (MANRGGSG). Arginine 402, glycine 404, and serine 405 together coordinate citrate. Over 407–416 (DLEVLSACNR) the chain is Cytoplasmic. Residues 417–438 (MNLISYAQISSRLGGGIVLVIA) traverse the membrane as a helical segment. Position 428 (arginine 428) interacts with citrate. Over 439-446 (SIVFGMMI) the chain is Periplasmic.

Belongs to the 2-hydroxycarboxylate transporter (2-HCT) (TC 2.A.24) family. Homodimer.

The protein localises to the cell inner membrane. It catalyses the reaction citrate(out) + 2 Na(+)(out) = citrate(in) + 2 Na(+)(in). Its activity is regulated as follows. In the absence of Na(+), transport is inhibited by the thiol reagents N-ethylmaleimide (NEM) and the methanethiosulfonate (MTS) derivatives MTSEA, MTSET and MTSES. However, inactivation by NEM, MTSES and MTSET is prevented by the presence of Na(+). In the absence of Na(+), the substrate citrate has no effect on the inactivation by permeable or impermeable thiol reagents. In contrast, when subsaturating concentrations of Na(+) are present, citrate significantly reduces inactivation, suggesting ordered binding of the substrate and co-ion; citrate is bound after Na(+). The membrane impermeable bulky maleimide AmdiS does not inactivate the transporter in right-side-out membrane vesicles. The apparent affinity for Na(+) decreases with increasing proton concentration. Protons cannot replace Na(+) in the translocation step but the decrease in apparent affinity for Na(+) towards lower pH suggests that protons can compete with Na(+) for the cation-binding sites. Its function is as follows. Secondary active transporter that catalyzes the uptake of citrate across the membrane with the concomitant uptake of sodium. There are conflicting data regarding exact substrate stoichiometry: the sodium/citrate stoichiometry was predicted to be 1, but the latest studies suggest that CitS transports citrate in symport with 2 sodium ions. Transports citrate as a divalent citrate anion, H-citrate(2-). Shows narrow substrate specificity and is very specific, transporting only citrate and to a low extent citromalate. Symport of Na(+) is absolutely required in the range pH 5-7 because no uptake can be detected in the absence of Na(+). Lithium can replace Na(+) in the symport reaction but it takes about a 200-fold higher concentration of Li(+) over Na(+) to achieve the same rate of uptake. This chain is Citrate/sodium symporter, found in Klebsiella pneumoniae.